Consider the following 73-residue polypeptide: Guanine nucleotide-binding protein G(I)/G(S)/G(O) subunit gamma-11 (73 aa).

The interval 51–73 (DPLVKGIPEDKNPFKEKGSCVIS) is disordered. A Cysteine methyl ester modification is found at Cys70. Cys70 carries the S-farnesyl cysteine lipid modification. Residues 71–73 (VIS) constitute a propeptide, removed in mature form.

It belongs to the G protein gamma family. In terms of assembly, g proteins are composed of 3 units, alpha, beta and gamma. Interacts with beta-1 and beta-3, but not with beta-2. In terms of tissue distribution, abundantly expressed in all tissues tested except for brain.

The protein resides in the cell membrane. In terms of biological role, guanine nucleotide-binding proteins (G proteins) are involved as a modulator or transducer in various transmembrane signaling systems. The beta and gamma chains are required for the GTPase activity, for replacement of GDP by GTP, and for G protein-effector interaction. The protein is Guanine nucleotide-binding protein G(I)/G(S)/G(O) subunit gamma-11 (GNG11) of Homo sapiens (Human).